Here is a 100-residue protein sequence, read N- to C-terminus: Protein alpha-2 (100 aa).

In Bos taurus (Bovine), this protein is Protein alpha-2.